The chain runs to 1173 residues: MSNLPKPASHFEPEKNVDDKGNVTGSAPPVSKDTPTQQASVSLPNQEEPTQQTLVTTELPTKPDYNDLLLKASDERLLLVKEAKPQTLRFYASPTGLTASGFSIVTSPTSSYEQHAIDIFPYNCPVDKIVPAFTLEQIKITNDVLSSAQQSYLSRIPHDTSLVKLNEIEVVTGGSRDLFSLGTGYVMVVPNAEFFEGANLKFVYGVPMADIIFSKLTSQSAADYAFLDRSRIASGFIMFALHFALRTNVNLVVTKDNSARFASELSYSRPMSFVQGKKIVLPVQPHVCFAEGNSLMRYLDTALEGKYTQGVTYKYGRERIITETKEGGPITEITYLNIDNVTAQALGITAHVIGIDRYREDNVKRALLAYSLSGSTVDLMQSDESERMFGRMLSPQQELSYLLVGAALSQDVYKTILRANLDAFMMFGTVMPSLSDSLAKIPADAGNQQIISLIRERQSVSGFENAMEYLAMQVTPPLIWPCVISREVNVTGLSLLIMLLEYILFFIFYPSLAKKCGAGLCNNFYKLVFALSNSEWSQFVTRVGYDGTLGNSIPITDEDYWSNARRPALFTTDLSQFRLLGLIQRLIAPIGEHREHVKAQAAEFPRLKARTEYWNPYPNPGAQHVEQTIFKARLLQAFDETLTLVKDLNQTGQLVSKTLMAGVAKVFNTCKIKLRYHGVGFGRDIGMPLAYLRDRKINFYHDYDGRLDTPFPNQMMLVSASQSPHDHKIPIELRRKGQIVLETGVVWTLVLGLQFPSHQFDEDMTNDPICKFRAPSPGEELGKDDTIIAMCANACVPFSIAAGIISESYADGGMKEIKELLSGSLSSTEFRNLISCIQTAMQGSGFNVGRNRDVFRQNETVDLRFIEPKVRYVENELTIIAPTPQDPPIIRGDLQLIPEGLMPRFRLGLTAIADSSSEYSRLRKGLYLARCEVDVEAPNNALPLDLRDYVEVEYSHDLFQVRRIQTKQALGIFYQGEFYYRPALVPKMLIVVNTSEEMEPSYQEFFMQCLEERRIVIKLPKMYFLSRIVCTHSIQRPDERDAVLGLLAVRNDQIPLVTFYDTEQVDPTIQFDGLASGSKSKFIWPISSIDQNVVVRALGASGSTAPIGFAAPTDSMCDSGSIDDVGNLTTGAGVLKDPRVISLTNGVINYTERANLTGRVLYRYRPAYALDSY.

Residues 1 to 53 (MSNLPKPASHFEPEKNVDDKGNVTGSAPPVSKDTPTQQASVSLPNQEEPTQQT) form a disordered region. Over residues 9–21 (SHFEPEKNVDDKG) the composition is skewed to basic and acidic residues. Over residues 33–53 (DTPTQQASVSLPNQEEPTQQT) the composition is skewed to polar residues.

The protein belongs to the turreted BTV-fold inner capsid family. Homodecamer; each decamer is made up of two conformers of VP2, called VP2A and VP2B. 12 homodecamers assemble to form an icosahedral capsid.

Its subcellular location is the virion. In terms of biological role, inner capsid protein that self-assembles to form an icosahedral capsid with a T=2 symmetry, which consists of 120 copies of VP2, with channels at each of its five-fold vertices. This capsid constitutes the innermost concentric layer of the viral mature particle. The sequence is that of Inner capsid protein VP3 from Rice ragged stunt virus (isolate Thailand) (RRSV).